The primary structure comprises 461 residues: Ribulose bisphosphate carboxylase (461 aa).

Asn-112 contacts substrate. The active-site Proton acceptor is the Lys-167. Lys-169 contacts substrate. Mg(2+)-binding residues include Lys-192, Asp-194, and Glu-195. Lys-192 carries the post-translational modification N6-carboxylysine. His-288 serves as the catalytic Proton acceptor. Substrate contacts are provided by Arg-289, His-322, and Ser-369.

It belongs to the RuBisCO large chain family. Type II subfamily. Homodimer. Mg(2+) is required as a cofactor.

It carries out the reaction 2 (2R)-3-phosphoglycerate + 2 H(+) = D-ribulose 1,5-bisphosphate + CO2 + H2O. The catalysed reaction is D-ribulose 1,5-bisphosphate + O2 = 2-phosphoglycolate + (2R)-3-phosphoglycerate + 2 H(+). RuBisCO catalyzes two reactions: the carboxylation of D-ribulose 1,5-bisphosphate, the primary event in carbon dioxide fixation, as well as the oxidative fragmentation of the pentose substrate. Both reactions occur simultaneously and in competition at the same active site. The polypeptide is Ribulose bisphosphate carboxylase (Rhodopseudomonas palustris (strain BisB5)).